Consider the following 860-residue polypeptide: Ubiquitin fusion degradation protein 3 homolog (860 aa).

WD repeat units follow at residues 27–65 (AHKS…YTKT), 71–112 (PKGI…PYAI), 115–154 (EHKQ…SSSF), 163–203 (GHTL…SVFK), 204–242 (GHTD…ILRK), and 244–283 (ATQA…DGNL). In terms of domain architecture, PFU spans 397–497 (PIHYLEEITR…DKLSKGAASA (101 aa)). The interval 494 to 585 (AASAQSGYED…LPQNKKKPRG (92 aa)) is disordered. A PUL domain is found at 586-856 (PLVPVPDFYI…KNIARDIVEM (271 aa)).

The protein belongs to the WD repeat PLAP family. As to quaternary structure, interacts with cdc-48.1. In terms of tissue distribution, expressed in intestine (at protein level).

It localises to the cytoplasm. Functionally, plays a role in protein ubiquitination, sorting and degradation through its association with cdc-48.1 and/or cdc-48.2. The sequence is that of Ubiquitin fusion degradation protein 3 homolog from Caenorhabditis elegans.